The sequence spans 202 residues: Thymidylate kinase (202 aa).

Residue 7–14 (GTEGVGKT) participates in ATP binding.

The protein belongs to the thymidylate kinase family.

The enzyme catalyses dTMP + ATP = dTDP + ADP. In terms of biological role, phosphorylation of dTMP to form dTDP in both de novo and salvage pathways of dTTP synthesis. The protein is Thymidylate kinase of Acinetobacter baylyi (strain ATCC 33305 / BD413 / ADP1).